Consider the following 89-residue polypeptide: MSITAERKTALIKEYARGGADTGSPEVQIAILTERIANLTGHFKTHTKDNHSRRGLLKLVSQRRSLLDYLKRKDEARYRALIERLGIRR.

This sequence belongs to the universal ribosomal protein uS15 family. Part of the 30S ribosomal subunit. Forms a bridge to the 50S subunit in the 70S ribosome, contacting the 23S rRNA.

Its function is as follows. One of the primary rRNA binding proteins, it binds directly to 16S rRNA where it helps nucleate assembly of the platform of the 30S subunit by binding and bridging several RNA helices of the 16S rRNA. Forms an intersubunit bridge (bridge B4) with the 23S rRNA of the 50S subunit in the ribosome. This is Small ribosomal subunit protein uS15 from Methylobacterium nodulans (strain LMG 21967 / CNCM I-2342 / ORS 2060).